The sequence spans 1295 residues: DNA-directed RNA polymerase subunit beta' (1295 aa).

Cys66, Cys68, Cys81, and Cys84 together coordinate Zn(2+). Mg(2+) contacts are provided by Asp562, Asp564, and Asp566. Residues Cys901, Cys975, Cys982, and Cys985 each contribute to the Zn(2+) site.

Belongs to the RNA polymerase beta' chain family. In terms of assembly, the RNAP catalytic core consists of 2 alpha, 1 beta, 1 beta' and 1 omega subunit. When a sigma factor is associated with the core the holoenzyme is formed, which can initiate transcription. Requires Mg(2+) as cofactor. Zn(2+) serves as cofactor.

It catalyses the reaction RNA(n) + a ribonucleoside 5'-triphosphate = RNA(n+1) + diphosphate. DNA-dependent RNA polymerase catalyzes the transcription of DNA into RNA using the four ribonucleoside triphosphates as substrates. The chain is DNA-directed RNA polymerase subunit beta' from Rubrobacter xylanophilus (strain DSM 9941 / JCM 11954 / NBRC 16129 / PRD-1).